A 90-amino-acid polypeptide reads, in one-letter code: uncharacterized protein (90 aa).

Residues 25–90 (GEAAYNSPTN…PPIAPPPILD (66 aa)) are disordered. Polar residues-rich tracts occupy residues 30–54 (NSPT…TESV) and 65–79 (NDQT…SNVN).

This is an uncharacterized protein from Bacillus subtilis (strain 168).